Consider the following 322-residue polypeptide: Replication factor C small subunit (322 aa).

46 to 53 (GSAGVGKT) is an ATP binding site.

Belongs to the activator 1 small subunits family. RfcS subfamily. Heteromultimer composed of small subunits (RfcS) and large subunits (RfcL).

Its function is as follows. Part of the RFC clamp loader complex which loads the PCNA sliding clamp onto DNA. This chain is Replication factor C small subunit, found in Methanoregula boonei (strain DSM 21154 / JCM 14090 / 6A8).